Reading from the N-terminus, the 196-residue chain is Large ribosomal subunit protein uL18 (196 aa).

Belongs to the universal ribosomal protein uL18 family. Part of the 50S ribosomal subunit. Contacts the 5S and 23S rRNAs.

Its function is as follows. This is one of the proteins that bind and probably mediate the attachment of the 5S RNA into the large ribosomal subunit, where it forms part of the central protuberance. The polypeptide is Large ribosomal subunit protein uL18 (Desulfurococcus amylolyticus (strain DSM 18924 / JCM 16383 / VKM B-2413 / 1221n) (Desulfurococcus kamchatkensis)).